Here is a 238-residue protein sequence, read N- to C-terminus: NAD(P)H-hydrate epimerase (238 aa).

In terms of domain architecture, YjeF N-terminal spans 10-225; it reads AIKVDQILFN…ALQRQYELNL (216 aa). Residue 68–72 participates in (6S)-NADPHX binding; the sequence is NNGGD. The K(+) site is built by asparagine 69 and aspartate 133. (6S)-NADPHX is bound by residues 137 to 143 and aspartate 166; that span reads GFSFKPP. Serine 169 lines the K(+) pocket.

This sequence belongs to the NnrE/AIBP family. K(+) is required as a cofactor.

It carries out the reaction (6R)-NADHX = (6S)-NADHX. It catalyses the reaction (6R)-NADPHX = (6S)-NADPHX. Catalyzes the epimerization of the S- and R-forms of NAD(P)HX, a damaged form of NAD(P)H that is a result of enzymatic or heat-dependent hydration. This is a prerequisite for the S-specific NAD(P)H-hydrate dehydratase to allow the repair of both epimers of NAD(P)HX. The protein is NAD(P)H-hydrate epimerase of Drosophila willistoni (Fruit fly).